The chain runs to 486 residues: Corytuberine synthase (486 aa).

Residues 6-21 (ALFSLIPVILVFILLL) form a helical membrane-spanning segment. C428 serves as a coordination point for heme.

Belongs to the cytochrome P450 family. The cofactor is heme.

The protein localises to the endoplasmic reticulum membrane. The catalysed reaction is (S)-reticuline + reduced [NADPH--hemoprotein reductase] + O2 = (S)-corytuberine + oxidized [NADPH--hemoprotein reductase] + 2 H2O + 2 H(+). Inhibited by ketoconazole. Functionally, cytochrome P450 that catalyzes an intramolecular C-C phenol coupling of (S)-reticuline in magnoflorine biosynthesis. Catalyzes the formation of (S)-corytuberine from (S)-reticuline, and also, with a lover efficiency, the 4'-O-demethylation of codamine to produce orientaline, and subsequent C-C-phenol coupling of orientaline. Can also use (R,S)-norreticuline, (R,S)-orientaline, (S)-N-methylcoclaurine and (S)-coclaurine as substrates, but not (R,S)-6-O-methyllaudanosoline, (R,S)-6-O-methylnorlaudanosoline, (R,S)-laudanine, (R,S)-norlaudanine, (R,S)-4'-O-methyllaudanosoline, (R,S)-pseudocodamine, (R,S)-norpseudocodamine, (R,S)-laudanosine, (R,S)-norlaudanosine, (R,S)-laudanosoline or (R,S)-norlaudanosoline. The chain is Corytuberine synthase from Coptis japonica (Japanese goldthread).